The chain runs to 616 residues: DNA-binding protein RFX5 (616 aa).

Positions 1-29 (MAEDEPDAKSPKTGGRAPPGGAEAGEPTT) are disordered. Residue alanine 2 is modified to N-acetylalanine. Phosphoserine is present on serine 10. Low complexity predominate over residues 13-29 (TGGRAPPGGAEAGEPTT). Positions 25-90 (GEPTTLLQRL…PSTLSNEEYM (66 aa)) are N-terminal domain. The tract at residues 62–66 (LYLYL) is leucine-rich region; critical for dimer formation and for interaction with RFXAP. The segment at residues 92–168 (AYRWIRNHLE…YCYSGIRRKT (77 aa)) is a DNA-binding region (RFX-type winged-helix). Positions 173 to 178 (PPLPGL) match the PxLPxI/L motif; mediates interaction with RFXANK motif. Position 185 is a phosphoserine (serine 185). Disordered stretches follow at residues 252–314 (AEED…ESSA) and 391–616 (LPGP…ATPP). The segment covering 276 to 293 (GAHKKPERLAQPPKDLEA) has biased composition (basic and acidic residues). A compositionally biased stretch (pro residues) spans 391-401 (LPGPGPGPGRA). Basic and acidic residues predominate over residues 424–434 (GPHDKGVKRTA). Basic residues predominate over residues 463 to 473 (KRKRGRPRKKS). Positions 534 to 546 (QGDGTVSKGGRGP) are enriched in gly residues. Over residues 606 to 616 (QEHKDPKATPP) the composition is skewed to basic and acidic residues.

The protein belongs to the RFX family. In terms of assembly, homodimer. The RFX heterotetrameric complex consists of 2 molecules of RFX5 and one each of RFXAP and RFX-B/RFXANK; with each subunit representing a separate complementation group. Interacts (via PxLPxI/L motif) with RFXANK (via ankyrin repeats); the interaction is direct. RFX forms cooperative DNA binding complexes with X2BP and CBF/NF-Y. RFX associates with CIITA to form an active transcriptional complex. In terms of processing, phosphorylated. In terms of tissue distribution, ubiquitous.

Its subcellular location is the nucleus. Its function is as follows. Activates transcription from class II MHC promoters. Recognizes X-boxes. Mediates cooperative binding between RFX and NF-Y. RFX binds the X1 box of MHC-II promoters. The chain is DNA-binding protein RFX5 (RFX5) from Homo sapiens (Human).